The sequence spans 202 residues: Ribosome maturation factor RimM (202 aa).

In terms of domain architecture, PRC barrel spans 100 to 195 (ADEWYPKDLI…YLTLDPPGGL (96 aa)).

The protein belongs to the RimM family. Binds ribosomal protein uS19.

Its subcellular location is the cytoplasm. In terms of biological role, an accessory protein needed during the final step in the assembly of 30S ribosomal subunit, possibly for assembly of the head region. Essential for efficient processing of 16S rRNA. May be needed both before and after RbfA during the maturation of 16S rRNA. It has affinity for free ribosomal 30S subunits but not for 70S ribosomes. The polypeptide is Ribosome maturation factor RimM (Bifidobacterium longum (strain NCC 2705)).